Reading from the N-terminus, the 2135-residue chain is Plexin-B1 (2135 aa).

The first 19 residues, 1 to 19, serve as a signal peptide directing secretion; it reads MPALGPALLQALWAGWVLT. A Sema domain is found at 20–479; that stretch reads LQPLPPTAFT…TQSTLLKVPV (460 aa). The Extracellular segment spans residues 20-1490; the sequence is LQPLPPTAFT…SPGAFPVAAQ (1471 aa). Asn-31 carries an N-linked (GlcNAc...) asparagine glycan. Cystine bridges form between Cys-79/Cys-88, Cys-111/Cys-119, Cys-252/Cys-377, Cys-268/Cys-322, Cys-340/Cys-364, Cys-482/Cys-499, Cys-488/Cys-533, Cys-491/Cys-508, and Cys-502/Cys-514. Asn-334 carries N-linked (GlcNAc...) asparagine glycosylation. An N-linked (GlcNAc...) asparagine glycan is attached at Asn-543. A disulfide bridge connects residues Cys-570 and Cys-588. Disordered stretches follow at residues 671–829 and 849–884; these read MVAS…TTFP and LPEA…PPAP. Over residues 681–697 the composition is skewed to pro residues; sequence SPDPPARGGPSPSPPTA. Low complexity-rich tracts occupy residues 698-710 and 734-754; these read PKAL…DTLP and SPWG…TGSP. 3 IPT/TIG domains span residues 1070–1160, 1162–1249, and 1252–1375; these read PLIH…FAYQ, PKVH…FKYT, and PNIT…FSYE. Asn-1183, Asn-1253, and Asn-1330 each carry an N-linked (GlcNAc...) asparagine glycan. The chain crosses the membrane as a helical span at residues 1491 to 1511; sequence VGLGVGTSLLALGVIIIVLMY. A coiled-coil region spans residues 1507-1539; sequence IVLMYRRKSKQALRDYKKVQIQLENLESSVRDR. Residues 1512–2135 are Cytoplasmic-facing; that stretch reads RRKSKQALRD…AAVENKVTDL (624 aa). The segment at 1883–1908 is disordered; it reads PWHLVKPSDEPEPPRPRRGSLRGGER. Over residues 1888–1897 the composition is skewed to basic and acidic residues; it reads KPSDEPEPPR.

Belongs to the plexin family. As to quaternary structure, monomer, and heterodimer with PLXNB2 after proteolytic processing. Binds RAC1 that has been activated by GTP binding. Interaction with SEMA4D promotes binding of cytoplasmic ligands. Interacts with PLXNA1. Interacts with ARHGEF11 and ARHGEF12. Interacts with ERBB2. Interacts with MET. Interacts with MST1R. Interacts with RRAS. Interacts with RHOD. Interacts with RND1. Interacts with NRP1 and NRP2. In terms of processing, phosphorylated on tyrosine residues by ERBB2 and MET upon SEMA4D binding. Proteolytic processing favors heterodimerization with PLXNB2 and SEMA4D binding. As to expression, highly expressed in fetal kidney, and at slightly lower levels in fetal brain, lung and liver.

The protein localises to the cell membrane. It is found in the secreted. In terms of biological role, receptor for SEMA4D. Plays a role in GABAergic synapse development. Mediates SEMA4A- and SEMA4D-dependent inhibitory synapse development. Plays a role in RHOA activation and subsequent changes of the actin cytoskeleton. Plays a role in axon guidance, invasive growth and cell migration. In Homo sapiens (Human), this protein is Plexin-B1 (PLXNB1).